Reading from the N-terminus, the 851-residue chain is Internalin J (851 aa).

A signal peptide spans 1 to 25 (MKTTKIVIASLVSLTMVSNPLLTFA). 14 LRR repeats span residues 94–115 (TLTS…EKLT), 116–136 (GLTK…SQNT), 137–157 (NLTY…TPLT), 158–179 (KLTY…QNPL), 180–200 (LTYL…HNTQ), 201–221 (LTEL…TPQT), 222–243 (QLTT…QNKL), 244–263 (LNRL…NQNI), 264–284 (QLTF…TPLT), 285–306 (QLTY…TLSK), 316–325 (DLLEIDLTHN), 338–357 (KIKE…DCQA), 359–368 (GITELDLSQN), and 380–402 (ELTE…NAHI). MucBP domains follow at residues 506-568 (PIKG…SQSV), 576-638 (IVAA…AQTV), 647-709 (APEK…SQTV), and 717-779 (IEAA…AQTV). The segment at 786–825 (NTNTDQPLPTKKPTNTTPTKPSNLKTTEVKKASDTLPKTG) is disordered. Positions 792 to 811 (PLPTKKPTNTTPTKPSNLKT) are enriched in low complexity. The LPXTG sorting signal signature appears at 821-825 (LPKTG). Threonine 824 carries the pentaglycyl murein peptidoglycan amidated threonine modification. Residues 825 to 851 (GDSAPWKSALLGVFLSSTALVIWKKKK) constitute a propeptide, removed by sortase A.

This sequence belongs to the internalin family. Nearly full-length mature protein and an internal LRR-containing fragment interact in vitro with human intestinal mucin-2 (MUC2) but not with mucin-1. LRR fragment binding is slightly better at pH 5.5, (the pH of the intestine) than at pH 7.4.

The protein resides in the secreted. It localises to the cell wall. Its activity is regulated as follows. Despite being transcribed during bacterial growth in culture the protein is only detected in infected mice. In terms of biological role, involved in several steps of L.monocytogenes infection by both intravenous and oral infection. Probably acts as an adhesion; upon ectopic expression in L.innocula bacteria adhere better to human cell lines. The sequence is that of Internalin J (inlJ) from Listeria monocytogenes serovar 1/2a (strain ATCC BAA-679 / EGD-e).